The sequence spans 293 residues: uncharacterized protein (293 aa).

Residue E47 is part of the active site.

This sequence belongs to the PhzF family.

This is an uncharacterized protein from Bacillus subtilis (strain 168).